The following is a 227-amino-acid chain: Peroxiredoxin-like 2A (227 aa).

The thioredoxin fold stretch occupies residues 13 to 111 (LWSISIGAFG…DQLGVPLYAV (99 aa)). Active-site redox-active residues include C84 and C87.

It belongs to the peroxiredoxin-like PRXL2 family. PRXL2A subfamily.

The protein localises to the cytoplasm. Its function is as follows. Involved in redox regulation of the cell. Acts as an antioxidant. This Xenopus tropicalis (Western clawed frog) protein is Peroxiredoxin-like 2A (prxl2a).